Reading from the N-terminus, the 74-residue chain is Protein krueppel (74 aa).

4 C2H2-type zinc fingers span residues 1-4 (ERTH), 10-32 (FECSQCHKRFTRDHHLKTHMRLH), 38-60 (YHCTHCDRHFVQVANLRRHLRVH), and 66-74 (YACELCASR).

Belongs to the krueppel C2H2-type zinc-finger protein family.

Its subcellular location is the nucleus. Krueppel is a gap class segmentation protein. The sequence is that of Protein krueppel (Kr) from Euscelis plebejus (Leafhopper).